Consider the following 217-residue polypeptide: Thymidylate kinase (217 aa).

Position 7 to 14 (7 to 14 (GIDGAGKS)) interacts with ATP.

The protein belongs to the thymidylate kinase family.

It catalyses the reaction dTMP + ATP = dTDP + ADP. Functionally, phosphorylation of dTMP to form dTDP in both de novo and salvage pathways of dTTP synthesis. In Chlorobaculum parvum (strain DSM 263 / NCIMB 8327) (Chlorobium vibrioforme subsp. thiosulfatophilum), this protein is Thymidylate kinase.